Consider the following 461-residue polypeptide: RCC1-like G exchanging factor-like protein (461 aa).

Positions 1–10 are enriched in low complexity; it reads MLAAARALRG. The transit peptide at 1–34 directs the protein to the mitochondrion; it reads MLAAARALRGPRPRWPTPAREHWTPAGRSRSRRE. The segment at 1–35 is disordered; sequence MLAAARALRGPRPRWPTPAREHWTPAGRSRSRREA. 7 RCC1 repeats span residues 55–121, 125–188, 190–244, 245–297, 298–350, 352–408, and 409–458; these read ADRV…LSSK, VTKV…VLTD, EGVF…FLTD, KGEV…ALSA, DGGV…VLNA, GHVF…ALTN, and KGEL…TLAK.

Forms a regulatory protein-RNA complex, consisting of RCC1L, NGRN, RPUSD3, RPUSD4, TRUB2, FASTKD2 and 16S mt-rRNA. Interacts with 16S mt-rRNA; this interaction is direct. Interacts with OPA1; this interaction is direct. As to expression, at E8.5, broadly expressed in yolk sac placenta, decidua, and embryo, with highest levels found in the trophoblast giant cells (TGCs) and ectoplacental cone (at protein level).

It localises to the mitochondrion inner membrane. Functionally, guanine nucleotide exchange factor (GEF) for mitochondrial dynamin-related GTPase OPA1. Activates OPA1, by exchanging bound GDP for free GTP, and drives OPA1 and MFN1-dependent mitochondrial fusion. Plays an essential role in mitochondrial ribosome biogenesis. As a component of a functional protein-RNA module, consisting of RCC1L, NGRN, RPUSD3, RPUSD4, TRUB2, FASTKD2 and 16S mitochondrial ribosomal RNA (16S mt-rRNA), controls 16S mt-rRNA abundance and is required for intra-mitochondrial translation of core subunits of the oxidative phosphorylation system. The chain is RCC1-like G exchanging factor-like protein from Mus musculus (Mouse).